The following is a 199-amino-acid chain: uncharacterized protein (199 aa).

It localises to the mitochondrion. This is an uncharacterized protein from Schizosaccharomyces pombe (strain 972 / ATCC 24843) (Fission yeast).